We begin with the raw amino-acid sequence, 591 residues long: BRCA1-associated protein (591 aa).

At S52 the chain carries Phosphoserine. Positions 82-93 (DEVRDTVEEKKP) are enriched in basic and acidic residues. Residues 82 to 124 (DEVRDTVEEKKPSAAPVSAQRSREQSESVNTAPESPSKQLPDQ) form a disordered region. Positions 108–124 (ESVNTAPESPSKQLPDQ) are enriched in polar residues. S116 and S118 each carry phosphoserine. The RING-type zinc finger occupies 263–303 (CTVCLERMDESVNGILTTLCNHSFHSQCLQRWDDTTCPVCR). The UBP-type; degenerate zinc finger occupies 300-392 (PVCRYCQTPE…GKIVQYECEG (93 aa)). C316, C319, C328, C331, C336, H343, H347, and H353 together coordinate Zn(2+). A coiled-coil region spans residues 430-536 (EKDTAEEINN…EIQEQLRDVM (107 aa)). The tract at residues 563 to 591 (IAMASAPNPPSSGAGGKLQSRKGRSKRGK) is disordered. Over residues 581–591 (QSRKGRSKRGK) the composition is skewed to basic residues.

As to quaternary structure, interacts with the nuclear localization signal of BRCA1 and with the N-terminal of KSR1. The C-terminal portion of BRCA1 interacts with DDB1. Isoform 2 is highly expressed in testis, lower levels in brain, heart, lung, stomach, colon, uterus, liver and kidney. Isoform 1 is only expressed in the testis. Isoform 2 is predominant over isoform 1 in both fetal and adult testis.

Its subcellular location is the cytoplasm. The catalysed reaction is S-ubiquitinyl-[E2 ubiquitin-conjugating enzyme]-L-cysteine + [acceptor protein]-L-lysine = [E2 ubiquitin-conjugating enzyme]-L-cysteine + N(6)-ubiquitinyl-[acceptor protein]-L-lysine.. Its pathway is protein modification; protein ubiquitination. In terms of biological role, negatively regulates MAP kinase activation by limiting the formation of Raf/MEK complexes probably by inactivation of the KSR1 scaffold protein. Also acts as a Ras responsive E3 ubiquitin ligase that, on activation of Ras, is modified by auto-polyubiquitination resulting in the release of inhibition of Raf/MEK complex formation. May also act as a cytoplasmic retention protein with a role in regulating nuclear transport. The polypeptide is BRCA1-associated protein (Mus musculus (Mouse)).